Reading from the N-terminus, the 97-residue chain is Large ribosomal subunit protein uL23 (97 aa).

The protein belongs to the universal ribosomal protein uL23 family. In terms of assembly, part of the 50S ribosomal subunit. Contacts protein L29, and trigger factor when it is bound to the ribosome.

In terms of biological role, one of the early assembly proteins it binds 23S rRNA. One of the proteins that surrounds the polypeptide exit tunnel on the outside of the ribosome. Forms the main docking site for trigger factor binding to the ribosome. The polypeptide is Large ribosomal subunit protein uL23 (Chelativorans sp. (strain BNC1)).